A 154-amino-acid chain; its full sequence is Catabolic 3-dehydroquinase (154 aa).

Tyr-25 (proton acceptor) is an active-site residue. Substrate is bound by residues Asn-79, His-85, and Asp-92. The active-site Proton donor is the His-105. Residues 106 to 107 (IS) and Arg-116 contribute to the substrate site.

It belongs to the type-II 3-dehydroquinase family. In terms of assembly, homododecamer. Adopts a ring-like structure, composed of an arrangement of two hexameric rings stacked on top of one another.

The catalysed reaction is 3-dehydroquinate = 3-dehydroshikimate + H2O. The protein operates within aromatic compound metabolism; 3,4-dihydroxybenzoate biosynthesis; 3,4-dihydroxybenzoate from 3-dehydroquinate: step 1/2. Is involved in the catabolism of quinate. Allows the utilization of quinate as carbon source via the beta-ketoadipate pathway. The polypeptide is Catabolic 3-dehydroquinase (Sclerotinia sclerotiorum (strain ATCC 18683 / 1980 / Ss-1) (White mold)).